The following is a 285-amino-acid chain: 4-diphosphocytidyl-2-C-methyl-D-erythritol kinase (285 aa).

K10 is an active-site residue. 93–103 (PIGGGLGGGSS) contacts ATP. D135 is an active-site residue.

This sequence belongs to the GHMP kinase family. IspE subfamily.

The catalysed reaction is 4-CDP-2-C-methyl-D-erythritol + ATP = 4-CDP-2-C-methyl-D-erythritol 2-phosphate + ADP + H(+). Its pathway is isoprenoid biosynthesis; isopentenyl diphosphate biosynthesis via DXP pathway; isopentenyl diphosphate from 1-deoxy-D-xylulose 5-phosphate: step 3/6. In terms of biological role, catalyzes the phosphorylation of the position 2 hydroxy group of 4-diphosphocytidyl-2C-methyl-D-erythritol. This chain is 4-diphosphocytidyl-2-C-methyl-D-erythritol kinase, found in Ruthia magnifica subsp. Calyptogena magnifica.